Here is a 336-residue protein sequence, read N- to C-terminus: Fructose-1,6-bisphosphatase class 1 (336 aa).

Residues Glu90, Asp112, Leu114, and Asp115 each coordinate Mg(2+). Residues 115–118, Asn211, and Lys277 contribute to the substrate site; that span reads DGSS. Glu283 contacts Mg(2+).

Belongs to the FBPase class 1 family. In terms of assembly, homotetramer. The cofactor is Mg(2+).

The protein resides in the cytoplasm. It catalyses the reaction beta-D-fructose 1,6-bisphosphate + H2O = beta-D-fructose 6-phosphate + phosphate. It functions in the pathway carbohydrate biosynthesis; gluconeogenesis. This chain is Fructose-1,6-bisphosphatase class 1, found in Pseudomonas paraeruginosa (strain DSM 24068 / PA7) (Pseudomonas aeruginosa (strain PA7)).